A 553-amino-acid polypeptide reads, in one-letter code: Phospholipase-B 81 (553 aa).

A signal peptide spans 1–35 (MVRFGSAASSDNRRRRCWSWYWGGLLLLWAVAETR). 4 N-linked (GlcNAc...) asparagine glycosylation sites follow: Asn-69, Asn-313, Asn-416, and Asn-531.

The protein belongs to the phospholipase B-like family. Expressed by the venom gland.

Its subcellular location is the secreted. In terms of biological role, may cause hemolysis. The sequence is that of Phospholipase-B 81 from Drysdalia coronoides (White-lipped snake).